The primary structure comprises 266 residues: Protein crossbronx-like (266 aa).

The 164-residue stretch at 15-178 (KQGYHILAEY…VQEQAILSRN (164 aa)) folds into the UBC core domain. The tract at residues 226 to 266 (SEYLGHIDSSRQMDEEETNQLEKLHRGRIPEPQREEAEVSL) is disordered. Over residues 245–266 (QLEKLHRGRIPEPQREEAEVSL) the composition is skewed to basic and acidic residues.

The protein belongs to the ubiquitin-conjugating enzyme family. FTS subfamily.

This is Protein crossbronx-like from Drosophila sechellia (Fruit fly).